Here is a 136-residue protein sequence, read N- to C-terminus: MWGRWGKKGNLANRTKLSVNRPRRWRGTRLGNRTQCREDALRRWRLGRAEEGMGSTDGRWWGRAELGAKLLRIGRSGGTDRRLEGGRPRSVDNMGSRDGRWWGRAELGAKFLRIGRRGGTDRRLGTGAMWSVRFIR.

This is an uncharacterized protein from Gallus gallus (Chicken).